Here is an 86-residue protein sequence, read N- to C-terminus: Large ribosomal subunit protein bL27 (86 aa).

Positions 1–22 are disordered; that stretch reads MAHKKAGGSTRNGRDSESKRLG.

Belongs to the bacterial ribosomal protein bL27 family.

The protein is Large ribosomal subunit protein bL27 of Vibrio cholerae serotype O1 (strain ATCC 39315 / El Tor Inaba N16961).